Reading from the N-terminus, the 476-residue chain is MDFEAVIGLEVHAELSTNTKIYCGCTTEFGGQPNTHVCPICLGLPGSLPQLNKRVVEYGIKAGLALNCSINKVCRMDRKNYFYPDCPKNYQITQDEVPICRDGYIEIELENGEKKRIGIERIHMEEDAGKLLHTNAGTLVDYNRAGVPLIEIVSRPDIRTPEEATKYLEKLKSILSSIEVSDCKMEQGSLRCDGNISVMPKGSEKFGVRSEIKNMNSFKALEKALSYEYDRHVEAVTKGETLEQETRRWDEANSVTVLMRSKEKANDYRYFPEGDLVTLNISDEWIEEVRKTIPELPHEKAERFVNEFGIPKYDAMVLTLTMDMAKFFEETAVKSEDAKAASNWLMGDISRLMNEKTIEVKNLKFNPEQLAQLIKLINAGTISNNIGKKVLDDMFKSGKNPKDIVEEKGLVQNNDEGAILEVVKKIIENNPQSIEDFKNGKKRALGFLVGLVMKETKGKANPQIVNKVVSEEANKM.

This sequence belongs to the GatB/GatE family. GatB subfamily. In terms of assembly, heterotrimer of A, B and C subunits.

It catalyses the reaction L-glutamyl-tRNA(Gln) + L-glutamine + ATP + H2O = L-glutaminyl-tRNA(Gln) + L-glutamate + ADP + phosphate + H(+). It carries out the reaction L-aspartyl-tRNA(Asn) + L-glutamine + ATP + H2O = L-asparaginyl-tRNA(Asn) + L-glutamate + ADP + phosphate + 2 H(+). Allows the formation of correctly charged Asn-tRNA(Asn) or Gln-tRNA(Gln) through the transamidation of misacylated Asp-tRNA(Asn) or Glu-tRNA(Gln) in organisms which lack either or both of asparaginyl-tRNA or glutaminyl-tRNA synthetases. The reaction takes place in the presence of glutamine and ATP through an activated phospho-Asp-tRNA(Asn) or phospho-Glu-tRNA(Gln). This is Aspartyl/glutamyl-tRNA(Asn/Gln) amidotransferase subunit B from Clostridium botulinum (strain Loch Maree / Type A3).